Here is a 404-residue protein sequence, read N- to C-terminus: Argininosuccinate synthase (404 aa).

Residues 12-20 (AYSGGLDTS) and Ala39 each bind ATP. Positions 91 and 96 each coordinate L-citrulline. Gly121 serves as a coordination point for ATP. L-aspartate contacts are provided by Thr123, Asn127, and Asp128. Asn127 is a binding site for L-citrulline. 5 residues coordinate L-citrulline: Arg131, Ser180, Ser189, Glu265, and Tyr277.

This sequence belongs to the argininosuccinate synthase family. Type 1 subfamily. As to quaternary structure, homotetramer.

Its subcellular location is the cytoplasm. It catalyses the reaction L-citrulline + L-aspartate + ATP = 2-(N(omega)-L-arginino)succinate + AMP + diphosphate + H(+). It participates in amino-acid biosynthesis; L-arginine biosynthesis; L-arginine from L-ornithine and carbamoyl phosphate: step 2/3. This is Argininosuccinate synthase from Vibrio cholerae serotype O1 (strain ATCC 39541 / Classical Ogawa 395 / O395).